Consider the following 183-residue polypeptide: Peptidyl-tRNA hydrolase (183 aa).

Tyrosine 14 contributes to the tRNA binding site. The active-site Proton acceptor is the histidine 19. Positions 64 and 66 each coordinate tRNA.

The protein belongs to the PTH family. As to quaternary structure, monomer.

Its subcellular location is the cytoplasm. The enzyme catalyses an N-acyl-L-alpha-aminoacyl-tRNA + H2O = an N-acyl-L-amino acid + a tRNA + H(+). Functionally, hydrolyzes ribosome-free peptidyl-tRNAs (with 1 or more amino acids incorporated), which drop off the ribosome during protein synthesis, or as a result of ribosome stalling. In terms of biological role, catalyzes the release of premature peptidyl moieties from peptidyl-tRNA molecules trapped in stalled 50S ribosomal subunits, and thus maintains levels of free tRNAs and 50S ribosomes. The chain is Peptidyl-tRNA hydrolase from Syntrophomonas wolfei subsp. wolfei (strain DSM 2245B / Goettingen).